Reading from the N-terminus, the 82-residue chain is Delta-conotoxin-like SmVIA (82 aa).

The first 22 residues, 1–22 (MKLTCVMIVAVLFLIAWTFVTA), serve as a signal peptide directing secretion. The propeptide occupies 23–49 (DDSRNGLKNLFPKARHEMKNPEASKLN). 3 cysteine pairs are disulfide-bonded: C54–C69, C61–C73, and C68–C77. The residue at position 65 (P65) is a 4-hydroxyproline.

It belongs to the conotoxin O1 superfamily. Expressed by the venom duct.

It is found in the secreted. Functionally, delta-conotoxins bind to site 6 of voltage-gated sodium channels (Nav) and inhibit the inactivation process. The polypeptide is Delta-conotoxin-like SmVIA (Conus stercusmuscarum (Fly-specked cone)).